Reading from the N-terminus, the 92-residue chain is MTKLEDHLEGIINIFHQYSVRVGHFDTLNKRELKQLITKELPKTLQNTKDQPTIDKIFQDLDADKDGAVSFEEFVVLVSRVLKTAHIDIHKE.

2 EF-hand domains span residues 13–48 (NIFH…LQNT) and 49–84 (KDQP…VLKT). His16 lines the Cu cation pocket. Residue His16 coordinates Zn(2+). Residues Ser19 and His24 each contribute to the Ca(2+) site. Residue Asp26 coordinates Cu cation. Asp26 contacts Zn(2+). Residues Thr27 and Glu32 each contribute to the Ca(2+) site. Residues 38–53 (TKELPKTLQNTKDQPT) are hinge domain. Ca(2+)-binding residues include Asp62, Asp64, Asp66, and Glu73. The Cu cation site is built by His86 and His90. Residues His86 and His90 each coordinate Zn(2+).

This sequence belongs to the S-100 family. In terms of assembly, homodimer. Homooligomer (tetramer or hexamer) in the presence of calcium, zinc and copper ions. Interacts with AGER and both calcium and zinc are essential for the interaction. Interacts with CACYBP in a calcium-dependent manner. Up-regulated in stimulated inflammatory effector cells.

The protein resides in the secreted. Its subcellular location is the cytoplasm. It is found in the cytoskeleton. The protein localises to the cell membrane. Functionally, S100A12 is a calcium-, zinc- and copper-binding protein which plays a prominent role in the regulation of inflammatory processes and immune response. Its pro-inflammatory activity involves recruitment of leukocytes, promotion of cytokine and chemokine production, and regulation of leukocyte adhesion and migration. Acts as an alarmin or a danger associated molecular pattern (DAMP) molecule and stimulates innate immune cells via binding to receptor for advanced glycation endproducts (AGER). Binding to AGER activates the MAP-kinase and NF-kappa-B signaling pathways leading to production of pro-inflammatory cytokines and up-regulation of cell adhesion molecules ICAM1 and VCAM1. Acts as a monocyte and mast cell chemoattractant. Can stimulate mast cell degranulation and activation which generates chemokines, histamine and cytokines inducing further leukocyte recruitment to the sites of inflammation. Can inhibit the activity of matrix metalloproteinases; MMP2, MMP3 and MMP9 by chelating Zn(2+) from their active sites. This chain is Protein S100-A12 (S100A12), found in Bos taurus (Bovine).